The sequence spans 55 residues: Large ribosomal subunit protein bL33B (55 aa).

This sequence belongs to the bacterial ribosomal protein bL33 family.

This is Large ribosomal subunit protein bL33B (rpmG2) from Mycobacterium tuberculosis (strain CDC 1551 / Oshkosh).